Consider the following 283-residue polypeptide: Urease accessory protein UreD (283 aa).

The protein belongs to the UreD family. UreD, UreF and UreG form a complex that acts as a GTP-hydrolysis-dependent molecular chaperone, activating the urease apoprotein by helping to assemble the nickel containing metallocenter of UreC. The UreE protein probably delivers the nickel.

It localises to the cytoplasm. Functionally, required for maturation of urease via the functional incorporation of the urease nickel metallocenter. This chain is Urease accessory protein UreD, found in Rhodopseudomonas palustris (strain BisB5).